The following is a 117-amino-acid chain: Tyrosine-protein phosphatase 25 (117 aa).

The Tyrosine-protein phosphatase domain maps to 1 to 117 (WLMIIEQKCN…DLIGQSPIVV (117 aa)). Asp85 lines the substrate pocket.

The protein belongs to the protein-tyrosine phosphatase family.

The catalysed reaction is O-phospho-L-tyrosyl-[protein] + H2O = L-tyrosyl-[protein] + phosphate. The chain is Tyrosine-protein phosphatase 25 (STY-25) from Styela plicata (Wrinkled sea squirt).